Reading from the N-terminus, the 508-residue chain is Chromosomal replication initiator protein DnaA (508 aa).

A domain I, interacts with DnaA modulators region spans residues 1-91; that stretch reads MADDPGSSFT…TDALSRRLGQ (91 aa). The interval 91-167 is domain II; sequence QQIQLGVRIA…AIDPAVAAGT (77 aa). Residues 104 to 152 are disordered; the sequence is DDVEDALIPSAEPFPDTDADLSARRRTDSRASGERGAVTNTQPGWTNYF. Residues 124–136 show a composition bias toward basic and acidic residues; sequence LSARRRTDSRASG. Positions 141–152 are enriched in polar residues; sequence VTNTQPGWTNYF. The interval 168–384 is domain III, AAA+ region; it reads SLNRRYTFDT…GALIRVTAFA (217 aa). Glycine 212, glycine 214, lysine 215, and threonine 216 together coordinate ATP. A domain IV, binds dsDNA region spans residues 385–508; it reads SLNKTPIDKS…TTRIRQRSKR (124 aa).

Belongs to the DnaA family. As to quaternary structure, oligomerizes as a right-handed, spiral filament on DNA at oriC.

It localises to the cytoplasm. Plays an essential role in the initiation and regulation of chromosomal replication. ATP-DnaA binds to the origin of replication (oriC) to initiate formation of the DNA replication initiation complex once per cell cycle. Binds the DnaA box (a 9 base pair repeat at the origin) and separates the double-stranded (ds)DNA. Forms a right-handed helical filament on oriC DNA; dsDNA binds to the exterior of the filament while single-stranded (ss)DNA is stabiized in the filament's interior. The ATP-DnaA-oriC complex binds and stabilizes one strand of the AT-rich DNA unwinding element (DUE), permitting loading of DNA polymerase. After initiation quickly degrades to an ADP-DnaA complex that is not apt for DNA replication. Binds acidic phospholipids. This is Chromosomal replication initiator protein DnaA from Mycobacterium avium.